Reading from the N-terminus, the 268-residue chain is Probable 6-phosphogluconolactonase 1 (268 aa).

This sequence belongs to the glucosamine/galactosamine-6-phosphate isomerase family. 6-phosphogluconolactonase subfamily.

The protein resides in the cytoplasm. The protein localises to the cytosol. It carries out the reaction 6-phospho-D-glucono-1,5-lactone + H2O = 6-phospho-D-gluconate + H(+). It functions in the pathway carbohydrate degradation; pentose phosphate pathway; D-ribulose 5-phosphate from D-glucose 6-phosphate (oxidative stage): step 2/3. Functionally, catalyzes the hydrolysis of 6-phosphogluconolactone to 6-phosphogluconate. This is Probable 6-phosphogluconolactonase 1 from Arabidopsis thaliana (Mouse-ear cress).